A 2497-amino-acid polypeptide reads, in one-letter code: Integrator complex subunit 1 homolog (2497 aa).

Positions 1–10 are enriched in basic residues; that stretch reads MMLNKIKRSK. 6 disordered regions span residues 1–151, 300–337, 946–965, 1028–1108, 1234–1292, and 1572–1604; these read MMLN…NNNI, QPQP…IKKS, QQQQ…QQPT, TTTT…TSSS, INNN…NQKS, and NNNN…NNIT. 5 stretches are compositionally biased toward low complexity: residues 37–46, 60–151, 305–333, 946–963, and 1028–1058; these read SDNNNNNSND, NNSI…NNNI, QQQQ…QPQQ, QQQQ…QQQQ, and TTTT…SSSL. Residues 1075–1091 are compositionally biased toward polar residues; that stretch reads SGLSGSSNGINQSSDSI. Low complexity-rich tracts occupy residues 1097-1108, 1234-1265, 1272-1289, and 1572-1602; these read STSPTTTTTSSS, INNN…NINK, HSNS…NKNN, and NNNN…NNNN. A coiled-coil region spans residues 1645 to 1675; that stretch reads RILKNTTQQKQQKQQQKESVQKSIQSLSKLI. A compositionally biased stretch (low complexity) spans 2084–2115; it reads QQQQQQQQQQQQQQKQQSNNSNNINNNNNNNN. Disordered regions lie at residues 2084–2123 and 2329–2350; these read QQQQ…QKSK and NNNN…NNNN.

Belongs to the Integrator subunit 1 family. In terms of assembly, component of the Integrator complex. The core complex associates with protein phosphatase 2A subunits to form the Integrator-PP2A (INTAC) complex.

The protein localises to the nucleus. Its function is as follows. Component of the integrator complex, a multiprotein complex that terminates RNA polymerase II (Pol II) transcription in the promoter-proximal region of genes. The integrator complex provides a quality checkpoint during transcription elongation by driving premature transcription termination of transcripts that are unfavorably configured for transcriptional elongation: the complex terminates transcription by (1) catalyzing dephosphorylation of the C-terminal domain (CTD) of Pol II subunit polr2a, (2) degrading the exiting nascent RNA transcript via endonuclease activity and (3) promoting the release of Pol II from bound DNA. The integrator complex is also involved in terminating the synthesis of non-coding Pol II transcripts, such as enhancer RNAs (eRNAs), small nuclear RNAs (snRNAs), telomerase RNAs and long non-coding RNAs (lncRNAs). The polypeptide is Integrator complex subunit 1 homolog (ints1) (Dictyostelium discoideum (Social amoeba)).